The following is an 87-amino-acid chain: U3-theraphotoxin-Hhn1b (87 aa).

The N-terminal stretch at 1–24 is a signal peptide; the sequence is MVNMKASMFLTFAGLVLLFVVCYA. A propeptide spanning residues 25–52 is cleaved from the precursor; the sequence is SESEEKEFPREMLSSIFAVDNDFKQEER. Intrachain disulfides connect C54/C67 and C61/C72.

The protein belongs to the neurotoxin 10 (Hwtx-1) family. 51 (Hntx-8) subfamily. Hntx-8 sub-subfamily. As to expression, expressed by the venom gland.

The protein localises to the secreted. Functionally, ion channel inhibitor. The sequence is that of U3-theraphotoxin-Hhn1b from Cyriopagopus hainanus (Chinese bird spider).